A 350-amino-acid polypeptide reads, in one-letter code: DNA-directed RNA polymerase subunit alpha (350 aa).

Residues 1 to 226 (MLISQRPTLS…ELFGLARELN (226 aa)) are alpha N-terminal domain (alpha-NTD). Positions 241–350 (ADHIASFALP…NQDYAETEQL (110 aa)) are alpha C-terminal domain (alpha-CTD). The segment at 326-350 (ATGTWNSDAGYDLEDNQDYAETEQL) is disordered. Positions 336–350 (YDLEDNQDYAETEQL) are enriched in acidic residues.

This sequence belongs to the RNA polymerase alpha chain family. In terms of assembly, homodimer. The RNAP catalytic core consists of 2 alpha, 1 beta, 1 beta' and 1 omega subunit. When a sigma factor is associated with the core the holoenzyme is formed, which can initiate transcription.

It carries out the reaction RNA(n) + a ribonucleoside 5'-triphosphate = RNA(n+1) + diphosphate. In terms of biological role, DNA-dependent RNA polymerase catalyzes the transcription of DNA into RNA using the four ribonucleoside triphosphates as substrates. The polypeptide is DNA-directed RNA polymerase subunit alpha (Mycobacterium sp. (strain JLS)).